A 404-amino-acid chain; its full sequence is Cysteine desulfurase IscS (404 aa).

Pyridoxal 5'-phosphate-binding positions include 73–74 (AT), N153, Q181, and 201–203 (SAH). Residue K204 is modified to N6-(pyridoxal phosphate)lysine. T241 is a pyridoxal 5'-phosphate binding site. C327 (cysteine persulfide intermediate) is an active-site residue. C327 serves as a coordination point for [2Fe-2S] cluster.

It belongs to the class-V pyridoxal-phosphate-dependent aminotransferase family. NifS/IscS subfamily. Homodimer. Forms a heterotetramer with IscU, interacts with other sulfur acceptors. It depends on pyridoxal 5'-phosphate as a cofactor.

It localises to the cytoplasm. The enzyme catalyses (sulfur carrier)-H + L-cysteine = (sulfur carrier)-SH + L-alanine. The protein operates within cofactor biosynthesis; iron-sulfur cluster biosynthesis. Its function is as follows. Master enzyme that delivers sulfur to a number of partners involved in Fe-S cluster assembly, tRNA modification or cofactor biosynthesis. Catalyzes the removal of elemental sulfur atoms from cysteine to produce alanine. Functions as a sulfur delivery protein for Fe-S cluster synthesis onto IscU, an Fe-S scaffold assembly protein, as well as other S acceptor proteins. In Anaeromyxobacter sp. (strain Fw109-5), this protein is Cysteine desulfurase IscS.